We begin with the raw amino-acid sequence, 248 residues long: Triosephosphate isomerase (248 aa).

Substrate contacts are provided by Asn-10 and Lys-12. His-95 (electrophile) is an active-site residue. Glu-165 functions as the Proton acceptor in the catalytic mechanism.

Belongs to the triosephosphate isomerase family. In terms of assembly, homodimer.

The enzyme catalyses D-glyceraldehyde 3-phosphate = dihydroxyacetone phosphate. It functions in the pathway carbohydrate biosynthesis; gluconeogenesis. The protein operates within carbohydrate degradation; glycolysis; D-glyceraldehyde 3-phosphate from glycerone phosphate: step 1/1. The sequence is that of Triosephosphate isomerase (TPI1) from Kluyveromyces lactis (strain ATCC 8585 / CBS 2359 / DSM 70799 / NBRC 1267 / NRRL Y-1140 / WM37) (Yeast).